Here is a 128-residue protein sequence, read N- to C-terminus: Transmembrane protein 234 homolog (128 aa).

4 helical membrane-spanning segments follow: residues 3 to 23 (TYNI…NPLI), 53 to 73 (PSYT…FYTL), 80 to 100 (LVVP…GMLL), and 104 to 124 (VLHF…TICV).

This sequence belongs to the TMEM234 family.

It localises to the membrane. This is Transmembrane protein 234 homolog from Dictyostelium discoideum (Social amoeba).